A 302-amino-acid polypeptide reads, in one-letter code: Gigasin-6 (302 aa).

Residues 1-22 (MSSRNLLYSSVVLFLVLFYCHG) form the signal peptide. The helical transmembrane segment at 75–95 (ITTDTLFGLGGISALFANILI) threads the bilayer.

As to expression, component of the organic matrix of calcified shell layers.

It localises to the membrane. In Magallana gigas (Pacific oyster), this protein is Gigasin-6.